The sequence spans 507 residues: ATP synthase subunit alpha, chloroplastic (507 aa).

Residue G170–T177 participates in ATP binding.

Belongs to the ATPase alpha/beta chains family. In terms of assembly, F-type ATPases have 2 components, CF(1) - the catalytic core - and CF(0) - the membrane proton channel. CF(1) has five subunits: alpha(3), beta(3), gamma(1), delta(1), epsilon(1). CF(0) has four main subunits: a, b, b' and c.

Its subcellular location is the plastid. The protein resides in the chloroplast thylakoid membrane. It catalyses the reaction ATP + H2O + 4 H(+)(in) = ADP + phosphate + 5 H(+)(out). Its function is as follows. Produces ATP from ADP in the presence of a proton gradient across the membrane. The alpha chain is a regulatory subunit. The sequence is that of ATP synthase subunit alpha, chloroplastic from Pelargonium hortorum (Common geranium).